Consider the following 182-residue polypeptide: Sperm acrosome-associated protein 7 (182 aa).

Residues 1 to 24 form the signal peptide; it reads MAANRGSRTFLSVFLLCCWQGAEL. An N-linked (GlcNAc...) asparagine glycan is attached at Asn-40. A compositionally biased stretch (basic and acidic residues) spans 112–140; it reads LPTKEESGKNDRSTVANLHDHSSQTKHEP. Residues 112 to 154 are disordered; the sequence is LPTKEESGKNDRSTVANLHDHSSQTKHEPPSSPEGKGSSNDDV.

Testis-specific. Expressed in zygotene and pachytene spermatocytes, round spermatids, elongating spermatids and spermatozoa (at protein level). Testis-specific.

Its subcellular location is the secreted. The protein localises to the cytoplasmic vesicle. It localises to the secretory vesicle. It is found in the acrosome lumen. Involved in fertilization. Seems not to play a direct role in sperm-egg binding or gamete fusion. In Mus musculus (Mouse), this protein is Sperm acrosome-associated protein 7.